Consider the following 237-residue polypeptide: Ribonuclease PH (237 aa).

Phosphate is bound by residues Arg-86 and 124–126 (GTR).

It belongs to the RNase PH family. As to quaternary structure, homohexameric ring arranged as a trimer of dimers.

The catalysed reaction is tRNA(n+1) + phosphate = tRNA(n) + a ribonucleoside 5'-diphosphate. In terms of biological role, phosphorolytic 3'-5' exoribonuclease that plays an important role in tRNA 3'-end maturation. Removes nucleotide residues following the 3'-CCA terminus of tRNAs; can also add nucleotides to the ends of RNA molecules by using nucleoside diphosphates as substrates, but this may not be physiologically important. Probably plays a role in initiation of 16S rRNA degradation (leading to ribosome degradation) during starvation. The protein is Ribonuclease PH of Nitrobacter winogradskyi (strain ATCC 25391 / DSM 10237 / CIP 104748 / NCIMB 11846 / Nb-255).